A 556-amino-acid chain; its full sequence is Glutamine--tRNA ligase (556 aa).

A 'HIGH' region motif is present at residues 34-44 (PEPNGFLHIGH). ATP is bound by residues 35-37 (EPN) and 41-47 (HIGHAKA). L-glutamine-binding residues include aspartate 67 and tyrosine 212. Residues threonine 231, 261-262 (RL), and 269-271 (MSK) contribute to the ATP site. The 'KMSKS' region motif lies at 268–272 (LMSKR).

It belongs to the class-I aminoacyl-tRNA synthetase family. Monomer.

It localises to the cytoplasm. The enzyme catalyses tRNA(Gln) + L-glutamine + ATP = L-glutaminyl-tRNA(Gln) + AMP + diphosphate. This is Glutamine--tRNA ligase from Colwellia psychrerythraea (strain 34H / ATCC BAA-681) (Vibrio psychroerythus).